The sequence spans 562 residues: Dihydroxy-acid dehydratase (562 aa).

D78 lines the Mg(2+) pocket. C119 is a binding site for [2Fe-2S] cluster. Residues D120 and K121 each coordinate Mg(2+). Position 121 is an N6-carboxylysine (K121). Residue C192 coordinates [2Fe-2S] cluster. Mg(2+) is bound at residue E450. S476 (proton acceptor) is an active-site residue.

Belongs to the IlvD/Edd family. Homodimer. Requires [2Fe-2S] cluster as cofactor. It depends on Mg(2+) as a cofactor.

It catalyses the reaction (2R)-2,3-dihydroxy-3-methylbutanoate = 3-methyl-2-oxobutanoate + H2O. The catalysed reaction is (2R,3R)-2,3-dihydroxy-3-methylpentanoate = (S)-3-methyl-2-oxopentanoate + H2O. The protein operates within amino-acid biosynthesis; L-isoleucine biosynthesis; L-isoleucine from 2-oxobutanoate: step 3/4. Its pathway is amino-acid biosynthesis; L-valine biosynthesis; L-valine from pyruvate: step 3/4. Its function is as follows. Functions in the biosynthesis of branched-chain amino acids. Catalyzes the dehydration of (2R,3R)-2,3-dihydroxy-3-methylpentanoate (2,3-dihydroxy-3-methylvalerate) into 2-oxo-3-methylpentanoate (2-oxo-3-methylvalerate) and of (2R)-2,3-dihydroxy-3-methylbutanoate (2,3-dihydroxyisovalerate) into 2-oxo-3-methylbutanoate (2-oxoisovalerate), the penultimate precursor to L-isoleucine and L-valine, respectively. The chain is Dihydroxy-acid dehydratase from Nautilia profundicola (strain ATCC BAA-1463 / DSM 18972 / AmH).